The following is a 318-amino-acid chain: Death effector domain-containing protein (318 aa).

Positions 25 to 103 constitute a DED domain; sequence SLHRMFDIVG…RHDLLPYVTL (79 aa). A disordered region spans residues 128–191; that stretch reads PRALSDPEPR…SVTPDPKEKQ (64 aa).

Interacts with CASP8, CASP10, KRT8, KRT18, CASP3 and FADD. Homodimerizes and heterodimerizes with DEDD2. Post-translationally, exists predominantly in a mono- or diubiquitinated form. Ubiquitously expressed.

The protein resides in the cytoplasm. The protein localises to the nucleus. Its subcellular location is the nucleolus. Functionally, a scaffold protein that directs CASP3 to certain substrates and facilitates their ordered degradation during apoptosis. May also play a role in mediating CASP3 cleavage of KRT18. Regulates degradation of intermediate filaments during apoptosis. May play a role in the general transcription machinery in the nucleus and might be an important regulator of the activity of GTF3C3. Inhibits DNA transcription in vitro. This chain is Death effector domain-containing protein (Dedd), found in Mus musculus (Mouse).